The primary structure comprises 248 residues: Glucosamine-6-phosphate isomerase (248 aa).

Residue Asp68 is the Proton acceptor; for enolization step of the active site. The active-site For ring-opening step is the Glu137. His139 (proton acceptor; for ring-opening step) is an active-site residue. The For ring-opening step role is filled by Glu144.

Belongs to the glucosamine/galactosamine-6-phosphate isomerase family. Monomer.

It carries out the reaction alpha-D-glucosamine 6-phosphate + H2O = beta-D-fructose 6-phosphate + NH4(+). In Candida albicans (strain SC5314 / ATCC MYA-2876) (Yeast), this protein is Glucosamine-6-phosphate isomerase (NAG1).